The following is a 208-amino-acid chain: FMN-dependent NADH:quinone oxidoreductase 2 (208 aa).

This sequence belongs to the azoreductase type 1 family. Homodimer. It depends on FMN as a cofactor.

The enzyme catalyses 2 a quinone + NADH + H(+) = 2 a 1,4-benzosemiquinone + NAD(+). It catalyses the reaction N,N-dimethyl-1,4-phenylenediamine + anthranilate + 2 NAD(+) = 2-(4-dimethylaminophenyl)diazenylbenzoate + 2 NADH + 2 H(+). In terms of biological role, quinone reductase that provides resistance to thiol-specific stress caused by electrophilic quinones. Its function is as follows. Also exhibits azoreductase activity. Catalyzes the reductive cleavage of the azo bond in aromatic azo compounds to the corresponding amines. This Bacillus cereus (strain ATCC 10987 / NRS 248) protein is FMN-dependent NADH:quinone oxidoreductase 2.